A 249-amino-acid polypeptide reads, in one-letter code: tRNA pseudouridine synthase A (249 aa).

Aspartate 53 (nucleophile) is an active-site residue. Tyrosine 111 lines the substrate pocket.

This sequence belongs to the tRNA pseudouridine synthase TruA family. As to quaternary structure, homodimer.

The catalysed reaction is uridine(38/39/40) in tRNA = pseudouridine(38/39/40) in tRNA. In terms of biological role, formation of pseudouridine at positions 38, 39 and 40 in the anticodon stem and loop of transfer RNAs. The sequence is that of tRNA pseudouridine synthase A from Streptococcus suis (strain 98HAH33).